The sequence spans 814 residues: DNA ligase (814 aa).

Residues 46–50, 95–96, and Glu-129 each bind NAD(+); these read DAEYD and SL. Lys-131 serves as the catalytic N6-AMP-lysine intermediate. Positions 152, 189, 305, and 329 each coordinate NAD(+). Positions 434, 437, 458, and 464 each coordinate Zn(2+). The segment at 526–549 is disordered; it reads SAQRRTEGEPAPKKPTKKKGEEED. One can recognise a BRCT domain in the interval 735–814; it reads TSAAAFAGKT…DDWLAMLAEA (80 aa).

The protein belongs to the NAD-dependent DNA ligase family. LigA subfamily. Mg(2+) is required as a cofactor. It depends on Mn(2+) as a cofactor.

The enzyme catalyses NAD(+) + (deoxyribonucleotide)n-3'-hydroxyl + 5'-phospho-(deoxyribonucleotide)m = (deoxyribonucleotide)n+m + AMP + beta-nicotinamide D-nucleotide.. DNA ligase that catalyzes the formation of phosphodiester linkages between 5'-phosphoryl and 3'-hydroxyl groups in double-stranded DNA using NAD as a coenzyme and as the energy source for the reaction. It is essential for DNA replication and repair of damaged DNA. This is DNA ligase from Methylorubrum extorquens (strain CM4 / NCIMB 13688) (Methylobacterium extorquens).